Here is a 245-residue protein sequence, read N- to C-terminus: MKMKQISDTTLKITMSLEDLMDRGMEIADFLVPQEKTEEFFYAILDELEMPDSFLDTGMLSFRVTPKPDKVDVFVTKSKIDQNLDFEDLSDLPDMEELAQMSPDEFIKTLEKSIADKTKDDIEAIQSLEQVEAKEEEQEQAEQEAESKKEPYIYYILSFAKLADLVAFAKTVTFEMETSELYKMNERYYLTILVDIENHPSPYPAWLLARMREFADDSDISRSVLQEYGQVLMSHDAVLNLQKIG.

Belongs to the MecA family. Homodimer.

Functionally, enables the recognition and targeting of unfolded and aggregated proteins to the ClpC protease or to other proteins involved in proteolysis. The sequence is that of Adapter protein MecA from Streptococcus pneumoniae (strain Hungary19A-6).